Here is a 173-residue protein sequence, read N- to C-terminus: Shikimate kinase 2 (173 aa).

An ATP-binding site is contributed by glycine 12 to threonine 17. Mg(2+) is bound by residues threonine 16 and aspartate 32. Residues aspartate 34, arginine 58, and glycine 79 each contribute to the substrate site. Residues glutamate 112 to arginine 126 are LID domain. Arginine 120 serves as a coordination point for ATP. A substrate-binding site is contributed by arginine 139. Glutamine 155 is a binding site for ATP.

This sequence belongs to the shikimate kinase family. AroL subfamily. In terms of assembly, monomer. Requires Mg(2+) as cofactor.

The protein resides in the cytoplasm. The enzyme catalyses shikimate + ATP = 3-phosphoshikimate + ADP + H(+). It participates in metabolic intermediate biosynthesis; chorismate biosynthesis; chorismate from D-erythrose 4-phosphate and phosphoenolpyruvate: step 5/7. Its function is as follows. Catalyzes the specific phosphorylation of the 3-hydroxyl group of shikimic acid using ATP as a cosubstrate. The polypeptide is Shikimate kinase 2 (Pectobacterium atrosepticum (strain SCRI 1043 / ATCC BAA-672) (Erwinia carotovora subsp. atroseptica)).